The following is a 217-amino-acid chain: uncharacterized protein (217 aa).

The segment at 1-32 is disordered; it reads MTLKKHRGKMSEKSNVNKKFTNSTQNNSNWSN. Residues 22–32 show a composition bias toward low complexity; that stretch reads NSTQNNSNWSN.

This is an uncharacterized protein from Acidianus filamentous virus 2 (isolate Italy/Pozzuoli) (AFV-2).